The primary structure comprises 761 residues: Dipeptidyl-peptidase 4 (761 aa).

An N-terminal signal peptide occupies residues 1-15; it reads MTLSAWIILVTLAMA. Catalysis depends on charge relay system residues serine 622, aspartate 706, and histidine 738.

It belongs to the peptidase S9C family.

The protein localises to the membrane. Functionally, may be involved in metabolism of dipeptides or may affect host defense mechanisms. This is Dipeptidyl-peptidase 4 (DPP) from Giardia intestinalis (Giardia lamblia).